A 339-amino-acid polypeptide reads, in one-letter code: MSAIILGIESSCDDTSAAVIKDGYLLSNVVSSQAVHEAYGGVVPELASRAHQQNIVPVVHEALKRAGVTKEELSAVAFTRGPGLMGSLLVGVSFAKGFARSLGIPLIDVNHLTGHVLAHFIKAEGEENIQPKFPFLCLLVSGGNSQIILVKAYNDMEILGQTIDDAAGEAIDKCSKVMGLGYPGGPIIDKLARQGNPKAYTFSKPHIPGLDYSFSGLKTSFLYSLRDWMKDDPDFIEHHKVDLAASLEATVVDILMDKLRKAAKEYKIKEVAVAGGVSANNGLRNSFREHAEKYGWNIFIPKFSYTTDNAAMIAITGYFKYLDKDFCSIDLPAYSRVTL.

The Fe cation site is built by His-111 and His-115. Substrate-binding positions include 139–143 (LVSGG), Asp-172, Gly-185, Asp-189, and Asn-280. Asp-308 is a Fe cation binding site.

The protein belongs to the KAE1 / TsaD family. Fe(2+) is required as a cofactor.

Its subcellular location is the cytoplasm. It catalyses the reaction L-threonylcarbamoyladenylate + adenosine(37) in tRNA = N(6)-L-threonylcarbamoyladenosine(37) in tRNA + AMP + H(+). In terms of biological role, required for the formation of a threonylcarbamoyl group on adenosine at position 37 (t(6)A37) in tRNAs that read codons beginning with adenine. Is involved in the transfer of the threonylcarbamoyl moiety of threonylcarbamoyl-AMP (TC-AMP) to the N6 group of A37, together with TsaE and TsaB. TsaD likely plays a direct catalytic role in this reaction. In Bacteroides thetaiotaomicron (strain ATCC 29148 / DSM 2079 / JCM 5827 / CCUG 10774 / NCTC 10582 / VPI-5482 / E50), this protein is tRNA N6-adenosine threonylcarbamoyltransferase.